The primary structure comprises 608 residues: Putative multicopper oxidase GMC1 (608 aa).

Plastocyanin-like domains follow at residues 51–163 (INGY…LIVE), 243–374 (LING…ELYR), and 421–548 (ERTF…FEVP). Cu cation is bound by residues His-100, His-102, His-145, and His-147. Cu cation-binding residues include His-452, His-455, His-457, His-530, Cys-531, His-532, and His-536.

Belongs to the multicopper oxidase family. The cofactor is Cu cation.

In terms of biological role, could be an iron transport multicopper oxidase, which is required for Fe(2+) high affinity uptake. May be required to oxidize Fe(2+) and release it from the transporter. Essential component of copper-dependent iron transport. Involved in meiotic prophase and synaptonemal complex (SC) assembly. This chain is Putative multicopper oxidase GMC1 (GMC1), found in Saccharomyces cerevisiae (strain ATCC 204508 / S288c) (Baker's yeast).